Consider the following 200-residue polypeptide: Neutrophil gelatinase-associated lipocalin (200 aa).

An N-terminal signal peptide occupies residues 1 to 20; that stretch reads MALSVMCLGLALLGVLQSQA. Position 21 is a pyrrolidone carboxylic acid (Gln-21). Residue 72–74 coordinates a carboxymycobactin; it reads YST. N-linked (GlcNAc...) asparagine glycosylation is found at Asn-81 and Asn-85. A disulfide bridge links Cys-98 with Cys-197. Tyr-128 serves as a coordination point for enterobactin. A carboxymycobactin contacts are provided by Lys-147, Lys-156, and Tyr-160. Lys-156 provides a ligand contact to enterobactin.

It belongs to the calycin superfamily. Lipocalin family. As to quaternary structure, monomer. Homodimer; disulfide-linked. Heterodimer; disulfide-linked with MMP9. In terms of processing, N-glycosylated. As to expression, expressed in the cortical tubules of the kidney (at protein level). Also expressed in the medullary tubules of the kidney. Detected in lung, spleen, uterus, vagina and epididymis.

The protein localises to the secreted. It localises to the cytoplasmic granule lumen. It is found in the cytoplasmic vesicle lumen. Iron-trafficking protein involved in multiple processes such as apoptosis, innate immunity and renal development. Binds iron through association with 2,3-dihydroxybenzoic acid (2,3-DHBA), a siderophore that shares structural similarities with bacterial enterobactin, and delivers or removes iron from the cell, depending on the context. Iron-bound form (holo-24p3) is internalized following binding to the SLC22A17 (24p3R) receptor, leading to release of iron and subsequent increase of intracellular iron concentration. In contrast, association of the iron-free form (apo-24p3) with the SLC22A17 (24p3R) receptor is followed by association with an intracellular siderophore, iron chelation and iron transfer to the extracellular medium, thereby reducing intracellular iron concentration. Involved in apoptosis due to interleukin-3 (IL3) deprivation: iron-loaded form increases intracellular iron concentration without promoting apoptosis, while iron-free form decreases intracellular iron levels, inducing expression of the proapoptotic protein BCL2L11/BIM, resulting in apoptosis. Involved in innate immunity; limits bacterial proliferation by sequestering iron bound to microbial siderophores, such as enterobactin. Can also bind siderophores from M.tuberculosis. In Mus musculus (Mouse), this protein is Neutrophil gelatinase-associated lipocalin (Lcn2).